A 224-amino-acid chain; its full sequence is Phosphoribosylformylglycinamidine synthase subunit PurQ (224 aa).

In terms of domain architecture, Glutamine amidotransferase type-1 spans 1 to 224 (MIAIIKFPGT…ILLRRLGEWA (224 aa)). The Nucleophile role is filled by C84. Catalysis depends on residues H196 and E198.

Part of the FGAM synthase complex composed of 1 PurL, 1 PurQ and 2 PurS subunits.

The protein resides in the cytoplasm. The enzyme catalyses N(2)-formyl-N(1)-(5-phospho-beta-D-ribosyl)glycinamide + L-glutamine + ATP + H2O = 2-formamido-N(1)-(5-O-phospho-beta-D-ribosyl)acetamidine + L-glutamate + ADP + phosphate + H(+). It catalyses the reaction L-glutamine + H2O = L-glutamate + NH4(+). It participates in purine metabolism; IMP biosynthesis via de novo pathway; 5-amino-1-(5-phospho-D-ribosyl)imidazole from N(2)-formyl-N(1)-(5-phospho-D-ribosyl)glycinamide: step 1/2. Functionally, part of the phosphoribosylformylglycinamidine synthase complex involved in the purines biosynthetic pathway. Catalyzes the ATP-dependent conversion of formylglycinamide ribonucleotide (FGAR) and glutamine to yield formylglycinamidine ribonucleotide (FGAM) and glutamate. The FGAM synthase complex is composed of three subunits. PurQ produces an ammonia molecule by converting glutamine to glutamate. PurL transfers the ammonia molecule to FGAR to form FGAM in an ATP-dependent manner. PurS interacts with PurQ and PurL and is thought to assist in the transfer of the ammonia molecule from PurQ to PurL. The polypeptide is Phosphoribosylformylglycinamidine synthase subunit PurQ (Saccharolobus solfataricus (strain ATCC 35092 / DSM 1617 / JCM 11322 / P2) (Sulfolobus solfataricus)).